A 351-amino-acid polypeptide reads, in one-letter code: Histidine protein kinase SaeS (351 aa).

2 helical membrane passes run isoleucine 9–isoleucine 29 and threonine 40–isoleucine 60. The region spanning asparagine 61–asparagine 114 is the HAMP domain. Residues asparagine 129–aspartate 348 form the Histidine kinase domain. At histidine 132 the chain carries Phosphohistidine; by autocatalysis.

Post-translationally, autophosphorylated.

The protein localises to the cell membrane. The catalysed reaction is ATP + protein L-histidine = ADP + protein N-phospho-L-histidine.. Member of the two-component regulatory system SaeR/SaeS involved in the regulation of staphylococcal virulence factors in a strain-dependent fashion. Probably functions as a membrane-associated protein kinase that upon sensing the appropriate signal, autophosphorylates and in turn activates the cytosolic response regulator SaeR. The polypeptide is Histidine protein kinase SaeS (saeS) (Staphylococcus aureus (strain MRSA252)).